Here is an 85-residue protein sequence, read N- to C-terminus: Dynein light chain 1, cytoplasmic (85 aa).

It belongs to the dynein light chain family. In terms of assembly, homodimer. Cytoplasmic dynein consists of two catalytic heavy chains (HCs) and a number of non-catalytic subunits which present intermediate chains (ICs), light intermediate chains (LICs) and light chains (LCs). Component of the nuclear pore complex (NPC). NPC constitutes the exclusive means of nucleocytoplasmic transport. NPCs allow the passive diffusion of ions and small molecules and the active, nuclear transport receptor-mediated bidirectional transport of macromolecules such as proteins, RNAs, ribonucleoparticles (RNPs), and ribosomal subunits across the nuclear envelope. Due to its 8-fold rotational symmetry, all subunits are present with 8 copies or multiples thereof.

It is found in the cytoplasm. It localises to the cytoskeleton. The protein resides in the nucleus. Its subcellular location is the nuclear pore complex. Functionally, acts as one of several non-catalytic accessory components of the cytoplasmic dynein complex that are thought to be involved in linking dynein to cargos and to adapter proteins that regulate dynein function. Cytoplasmic dynein 1 acts as a motor for the intracellular retrograde motility of vesicles and organelles along microtubules. May play a role in changing or maintaining the spatial distribution of cytoskeletal structures. Also a component of the nuclear pore complex. The sequence is that of Dynein light chain 1, cytoplasmic (dlc2) from Schizosaccharomyces pombe (strain 972 / ATCC 24843) (Fission yeast).